We begin with the raw amino-acid sequence, 297 residues long: Phosphatidylglycerol--prolipoprotein diacylglyceryl transferase (297 aa).

4 consecutive transmembrane segments (helical) span residues 20-40, 50-70, 105-125, and 133-153; these read FLTI…GLFV, INPL…IIGA, AVWE…LSII, and IHLK…QSIG. Position 154 (Arg-154) interacts with a 1,2-diacyl-sn-glycero-3-phospho-(1'-sn-glycerol). 3 helical membrane passes run 193 to 213, 225 to 245, and 266 to 286; these read PTFL…IFVF, GFIS…IEGL, and AQFI…FLRL.

It belongs to the Lgt family.

It is found in the cell inner membrane. It carries out the reaction L-cysteinyl-[prolipoprotein] + a 1,2-diacyl-sn-glycero-3-phospho-(1'-sn-glycerol) = an S-1,2-diacyl-sn-glyceryl-L-cysteinyl-[prolipoprotein] + sn-glycerol 1-phosphate + H(+). Its pathway is protein modification; lipoprotein biosynthesis (diacylglyceryl transfer). Its function is as follows. Catalyzes the transfer of the diacylglyceryl group from phosphatidylglycerol to the sulfhydryl group of the N-terminal cysteine of a prolipoprotein, the first step in the formation of mature lipoproteins. This is Phosphatidylglycerol--prolipoprotein diacylglyceryl transferase from Prochlorococcus marinus (strain MIT 9312).